A 783-amino-acid polypeptide reads, in one-letter code: DNA ligase (783 aa).

NAD(+)-binding positions include 42–46, 91–92, and Glu-125; these read DAEYD and SL. Lys-127 serves as the catalytic N6-AMP-lysine intermediate. NAD(+)-binding residues include Arg-148, Glu-185, Lys-302, and Lys-326. Residues Cys-421, Cys-423, Cys-445, and Cys-451 each contribute to the Zn(2+) site. The BRCT domain occupies 705–783; that stretch reads KTDTAVAGKT…EDEWLELVAG (79 aa).

The protein belongs to the NAD-dependent DNA ligase family. LigA subfamily. Mg(2+) serves as cofactor. The cofactor is Mn(2+).

It carries out the reaction NAD(+) + (deoxyribonucleotide)n-3'-hydroxyl + 5'-phospho-(deoxyribonucleotide)m = (deoxyribonucleotide)n+m + AMP + beta-nicotinamide D-nucleotide.. In terms of biological role, DNA ligase that catalyzes the formation of phosphodiester linkages between 5'-phosphoryl and 3'-hydroxyl groups in double-stranded DNA using NAD as a coenzyme and as the energy source for the reaction. It is essential for DNA replication and repair of damaged DNA. The polypeptide is DNA ligase (Caulobacter vibrioides (strain ATCC 19089 / CIP 103742 / CB 15) (Caulobacter crescentus)).